A 1178-amino-acid polypeptide reads, in one-letter code: Thrombospondin-2 (1178 aa).

The N-terminal stretch at 1-22 is a signal peptide; it reads MLQRSRLLWLAVFITLWVSSDA. Residues 25–221 form the Laminin G-like domain; that stretch reads DAKEEENTFD…LQNIHLIFDT (197 aa). N-linked (GlcNAc...) asparagine glycans are attached at residues Asn-157, Asn-244, Asn-317, and Asn-322. The VWFC domain maps to 324–381; it reads SVCWQDGRVFADSESWIVDSCTKCTCQDSKIVCHQITCPPVSCADPSFIEGECCPVCS. 3 TSP type-1 domains span residues 387–437, 443–498, and 500–555; these read EEGW…KKCD, DGGW…APCP, and NGQW…RDCP. 27 cysteine pairs are disulfide-bonded: Cys-399–Cys-431, Cys-403–Cys-436, Cys-414–Cys-421, Cys-455–Cys-492, Cys-459–Cys-497, Cys-470–Cys-482, Cys-512–Cys-549, Cys-516–Cys-554, Cys-527–Cys-539, Cys-559–Cys-570, Cys-564–Cys-580, Cys-583–Cys-594, Cys-600–Cys-616, Cys-607–Cys-625, Cys-628–Cys-652, Cys-658–Cys-671, Cys-665–Cys-684, Cys-686–Cys-697, Cys-713–Cys-721, Cys-726–Cys-746, Cys-762–Cys-782, Cys-785–Cys-805, Cys-821–Cys-841, Cys-844–Cys-864, Cys-882–Cys-902, Cys-918–Cys-938, and Cys-954–Cys-1175. N-linked (GlcNAc...) asparagine glycosylation is present at Asn-463. An EGF-like 1 domain is found at 555-595; it reads PIDGCLSNPCFPGAECNSYPDGSWSCGPCPAGFLGNGTVCE. N-linked (GlcNAc...) asparagine glycosylation occurs at Asn-590. One can recognise an EGF-like 2 domain in the interval 654 to 698; sequence PENPCKDKTHSCHKSAECIYLGHFSDPMYKCECRTGYAGDGRICG. TSP type-3 repeat units lie at residues 699–734, 735–770, 771–793, 794–829, 830–852, 853–890, 891–926, and 927–962; these read EDSD…NSGQ, EDFD…NPRQ, FDYD…NPAQ, IDTD…NTDQ, SDTD…NPDQ, TDAD…NANQ, ADHD…NPEQ, and EDSD…AISE. Asn-716 carries N-linked (GlcNAc...) asparagine glycosylation. The interval 737–760 is disordered; it reads FDKDGKGDACDEDDDNDGVEDDKD. Acidic residues predominate over residues 746 to 759; sequence CDEDDDNDGVEDDK. Residues 852–941 form a disordered region; that stretch reads QTDADNDLVG…DGRGDICKDD (90 aa). Residues 853 to 872 are compositionally biased toward acidic residues; sequence TDADNDLVGDQCDNNEDIDE. The span at 891–901 shows a compositional bias: basic and acidic residues; it reads ADHDKDGKGDA. Over residues 902 to 911 the composition is skewed to acidic residues; that stretch reads CDPDDDNDGI. 2 stretches are compositionally biased toward basic and acidic residues: residues 912–924 and 931–940; these read PDDR…RYNP and GDGRGDICKD. The Cell attachment site motif lies at 934–936; the sequence is RGD. The TSP C-terminal domain occupies 966-1178; the sequence is RKFQMVPLDP…SDLKYECRDA (213 aa). N-linked (GlcNAc...) asparagine glycosylation is present at Asn-1075.

The protein belongs to the thrombospondin family. In terms of assembly, homotrimer; disulfide-linked. Can bind to fibrinogen, fibronectin, laminin and type V collagen.

Functionally, adhesive glycoprotein that mediates cell-to-cell and cell-to-matrix interactions. The protein is Thrombospondin-2 (THBS2) of Gallus gallus (Chicken).